Reading from the N-terminus, the 1347-residue chain is Spermatogenesis-associated protein 31A1 (1347 aa).

Residues 23–43 (PWVLDIFLTLVFALGFFFLLL) traverse the membrane as a helical segment. Disordered stretches follow at residues 55-89 (PSPS…ECPR), 106-235 (GPHL…STLI), 373-397 (EQDT…GPQK), 628-658 (DESP…EAQK), 899-955 (PRGI…REAV), and 1085-1160 (HEEP…PPSV). The span at 60–82 (GKRKCPVGRRRRPRGRMKNHSLR) shows a compositional bias: basic residues. Over residues 165–178 (LASTPSPGPMTTSV) the composition is skewed to polar residues. Pro residues predominate over residues 198–222 (PEPPALFPHPPHTPDPLACSPPPPK). Polar residues-rich tracts occupy residues 631–651 (PGTS…STGE) and 927–948 (LTYS…SSKA). 2 stretches are compositionally biased toward basic and acidic residues: residues 1108–1127 (HKSE…RLEG) and 1137–1146 (RKTEDTHQDE).

Belongs to the SPATA31 family.

It is found in the membrane. In terms of biological role, may play a role in spermatogenesis. The polypeptide is Spermatogenesis-associated protein 31A1 (Homo sapiens (Human)).